Reading from the N-terminus, the 182-residue chain is Molybdopterin synthase catalytic subunit (182 aa).

Residues 119 to 120 (HR), Lys135, and 142 to 144 (KRE) contribute to the substrate site. Positions 152-182 (VWRANRDGAPGQRIDTAEPAVGAGSGGEIDD) are disordered.

The protein belongs to the MoaE family. MOCS2B subfamily. Heterotetramer; composed of 2 small (MOCS2A) and 2 large (MOCS2B) subunits.

It localises to the cytoplasm. It catalyses the reaction 2 [molybdopterin-synthase sulfur-carrier protein]-C-terminal-Gly-aminoethanethioate + cyclic pyranopterin phosphate + H2O = molybdopterin + 2 [molybdopterin-synthase sulfur-carrier protein]-C-terminal Gly-Gly + 2 H(+). Its pathway is cofactor biosynthesis; molybdopterin biosynthesis. In terms of biological role, catalytic subunit of the molybdopterin synthase complex, a complex that catalyzes the conversion of precursor Z into molybdopterin. Acts by mediating the incorporation of 2 sulfur atoms from thiocarboxylated MOCS2A into precursor Z to generate a dithiolene group. This is Molybdopterin synthase catalytic subunit from Pyricularia oryzae (strain 70-15 / ATCC MYA-4617 / FGSC 8958) (Rice blast fungus).